The following is a 426-amino-acid chain: Glutamate-1-semialdehyde 2,1-aminomutase (426 aa).

N6-(pyridoxal phosphate)lysine is present on K265.

This sequence belongs to the class-III pyridoxal-phosphate-dependent aminotransferase family. HemL subfamily. In terms of assembly, homodimer. It depends on pyridoxal 5'-phosphate as a cofactor.

It is found in the cytoplasm. It catalyses the reaction (S)-4-amino-5-oxopentanoate = 5-aminolevulinate. It functions in the pathway porphyrin-containing compound metabolism; protoporphyrin-IX biosynthesis; 5-aminolevulinate from L-glutamyl-tRNA(Glu): step 2/2. This is Glutamate-1-semialdehyde 2,1-aminomutase from Klebsiella pneumoniae subsp. pneumoniae (strain ATCC 700721 / MGH 78578).